The primary structure comprises 91 residues: UPF0358 protein SAB0977 (91 aa).

It belongs to the UPF0358 family.

This chain is UPF0358 protein SAB0977, found in Staphylococcus aureus (strain bovine RF122 / ET3-1).